A 470-amino-acid polypeptide reads, in one-letter code: ATP-dependent protease ATPase subunit HslU (470 aa).

ATP contacts are provided by residues V22 and 64–69 (GVGKTE). A disordered region spans residues 145-187 (KKANNNTNSNNPLESLFGGSIPNFGQNNDDEEETPTDEVKTKR). ATP is bound by residues D283, E348, and R420.

The protein belongs to the ClpX chaperone family. HslU subfamily. In terms of assembly, a double ring-shaped homohexamer of HslV is capped on each side by a ring-shaped HslU homohexamer. The assembly of the HslU/HslV complex is dependent on binding of ATP.

Its subcellular location is the cytoplasm. Functionally, ATPase subunit of a proteasome-like degradation complex; this subunit has chaperone activity. The binding of ATP and its subsequent hydrolysis by HslU are essential for unfolding of protein substrates subsequently hydrolyzed by HslV. HslU recognizes the N-terminal part of its protein substrates and unfolds these before they are guided to HslV for hydrolysis. This Staphylococcus saprophyticus subsp. saprophyticus (strain ATCC 15305 / DSM 20229 / NCIMB 8711 / NCTC 7292 / S-41) protein is ATP-dependent protease ATPase subunit HslU.